The chain runs to 229 residues: Ribonuclease 3 (229 aa).

The 130-residue stretch at 4–133 (WEELQESVGF…FIGALYLDNG (130 aa)) folds into the RNase III domain. Residue E46 coordinates Mg(2+). D50 is a catalytic residue. Mg(2+) contacts are provided by D119 and E122. E122 is a catalytic residue. Residues 159 to 228 (DYKTQLQEIV…AQFAINKLIH (70 aa)) form the DRBM domain.

Belongs to the ribonuclease III family. In terms of assembly, homodimer. The cofactor is Mg(2+).

The protein resides in the cytoplasm. The enzyme catalyses Endonucleolytic cleavage to 5'-phosphomonoester.. In terms of biological role, digests double-stranded RNA. Involved in the processing of primary rRNA transcript to yield the immediate precursors to the large and small rRNAs (23S and 16S). Processes some mRNAs, and tRNAs when they are encoded in the rRNA operon. Processes pre-crRNA and tracrRNA of type II CRISPR loci if present in the organism. The protein is Ribonuclease 3 of Listeria monocytogenes serovar 1/2a (strain ATCC BAA-679 / EGD-e).